A 293-amino-acid chain; its full sequence is Ribosomal RNA small subunit methyltransferase H (293 aa).

S-adenosyl-L-methionine contacts are provided by residues 32–34 (GGH), Asp51, Phe78, Asp99, and Gln106. Residues 274 to 293 (DEIRENPASRSAKMRVARRL) form a disordered region.

The protein belongs to the methyltransferase superfamily. RsmH family.

It is found in the cytoplasm. It carries out the reaction cytidine(1402) in 16S rRNA + S-adenosyl-L-methionine = N(4)-methylcytidine(1402) in 16S rRNA + S-adenosyl-L-homocysteine + H(+). Functionally, specifically methylates the N4 position of cytidine in position 1402 (C1402) of 16S rRNA. The chain is Ribosomal RNA small subunit methyltransferase H from Sulfurihydrogenibium azorense (strain DSM 15241 / OCM 825 / Az-Fu1).